The chain runs to 332 residues: 2,3-diketo-L-gulonate reductase (332 aa).

His44 serves as the catalytic Proton donor. Residues 168-174 (ITMVDMS), 224-225 (WK), and 304-306 (GHE) each bind NAD(+).

The protein belongs to the LDH2/MDH2 oxidoreductase family. DlgD subfamily. As to quaternary structure, homodimer.

It localises to the cytoplasm. The catalysed reaction is 3-dehydro-L-gulonate + NAD(+) = 2,3-dioxo-L-gulonate + NADH + H(+). The enzyme catalyses 3-dehydro-L-gulonate + NADP(+) = 2,3-dioxo-L-gulonate + NADPH + H(+). In terms of biological role, catalyzes the reduction of 2,3-diketo-L-gulonate in the presence of NADH, to form 3-keto-L-gulonate. This chain is 2,3-diketo-L-gulonate reductase, found in Shigella boydii serotype 4 (strain Sb227).